The primary structure comprises 508 residues: Photosystem II CP47 reaction center protein (508 aa).

A run of 6 helical transmembrane segments spans residues 21 to 36 (AVHI…WAGS), 101 to 115 (IVFS…IWHW), 140 to 156 (GIHL…FGAF), 203 to 218 (IAAG…FHLS), 237 to 252 (VLSS…AFVV), and 457 to 472 (SFAL…HGAR).

It belongs to the PsbB/PsbC family. PsbB subfamily. As to quaternary structure, PSII is composed of 1 copy each of membrane proteins PsbA, PsbB, PsbC, PsbD, PsbE, PsbF, PsbH, PsbI, PsbJ, PsbK, PsbL, PsbM, PsbT, PsbX, PsbY, PsbZ, Psb30/Ycf12, at least 3 peripheral proteins of the oxygen-evolving complex and a large number of cofactors. It forms dimeric complexes. The cofactor is Binds multiple chlorophylls. PSII binds additional chlorophylls, carotenoids and specific lipids..

Its subcellular location is the plastid. It is found in the chloroplast thylakoid membrane. One of the components of the core complex of photosystem II (PSII). It binds chlorophyll and helps catalyze the primary light-induced photochemical processes of PSII. PSII is a light-driven water:plastoquinone oxidoreductase, using light energy to abstract electrons from H(2)O, generating O(2) and a proton gradient subsequently used for ATP formation. The sequence is that of Photosystem II CP47 reaction center protein from Daucus carota (Wild carrot).